The sequence spans 231 residues: Phosphatidylserine decarboxylase proenzyme (231 aa).

The active-site Schiff-base intermediate with substrate; via pyruvic acid is the Ser-189. Residue Ser-189 is modified to Pyruvic acid (Ser); by autocatalysis.

Belongs to the phosphatidylserine decarboxylase family. PSD-A subfamily. In terms of assembly, heterodimer of a large membrane-associated beta subunit and a small pyruvoyl-containing alpha subunit. Pyruvate is required as a cofactor. In terms of processing, is synthesized initially as an inactive proenzyme. Formation of the active enzyme involves a self-maturation process in which the active site pyruvoyl group is generated from an internal serine residue via an autocatalytic post-translational modification. Two non-identical subunits are generated from the proenzyme in this reaction, and the pyruvate is formed at the N-terminus of the alpha chain, which is derived from the carboxyl end of the proenzyme. The post-translation cleavage follows an unusual pathway, termed non-hydrolytic serinolysis, in which the side chain hydroxyl group of the serine supplies its oxygen atom to form the C-terminus of the beta chain, while the remainder of the serine residue undergoes an oxidative deamination to produce ammonia and the pyruvoyl prosthetic group on the alpha chain.

The protein localises to the cell membrane. It carries out the reaction a 1,2-diacyl-sn-glycero-3-phospho-L-serine + H(+) = a 1,2-diacyl-sn-glycero-3-phosphoethanolamine + CO2. It functions in the pathway phospholipid metabolism; phosphatidylethanolamine biosynthesis; phosphatidylethanolamine from CDP-diacylglycerol: step 2/2. Catalyzes the formation of phosphatidylethanolamine (PtdEtn) from phosphatidylserine (PtdSer). This is Phosphatidylserine decarboxylase proenzyme from Chelativorans sp. (strain BNC1).